The following is a 575-amino-acid chain: MPQTTDEAASVSTVADIKPRSRDVTDGLEKAAARGMLRAVGMDDEDFAKPQIGVASSWNEITPCNLSLDRLANAVKEGVFSAGGYPLEFGTISVSDGISMGHEGMHFSLVSREVIADSVEVVMQAERLDGSVLLAGCDKSLPGMLMAAARLDLAAVFLYAGSILPGRAKLSDGSERDVTIIDAFEAVGACSRGLMSRADVDAIERAICPGEGACGGMYTANTMASAAEALGMSLPGSAAPPATDRRRDGFARRSGQAVVELLRRGITARDILTKEAFENAIAVVMAFGGSTNAVLHLLAIAHEANVALSLQDFSRIGSGVPHLADVKPFGRHVMSDVDHIGGVPVVMKALLDAGLLHGDCLTVTGHTMAENLAAITPPDPDGKVLRALANPIHPSGGITILHGSLAPEGAVVKTAGFDSDVFEGTARVFDGERAALDALEDGTITVGDAVVIRYEGPKGGPGMREMLAITGAIKGAGLGKDVLLLTDGRFSGGTTGLCVGHIAPEAVDGGPIALLRNGDRIRLDVAGRVLDVLADPAEFASRQQDFSPPPPRYTTGVLSKYVKLVSSAAVGAVCG.

Position 64 (C64) interacts with [2Fe-2S] cluster. D96 provides a ligand contact to Mg(2+). C137 serves as a coordination point for [2Fe-2S] cluster. Mg(2+)-binding residues include D138 and K139. K139 is modified (N6-carboxylysine). C214 is a [2Fe-2S] cluster binding site. E465 contributes to the Mg(2+) binding site. S491 functions as the Proton acceptor in the catalytic mechanism.

This sequence belongs to the IlvD/Edd family. As to quaternary structure, homodimer. [2Fe-2S] cluster serves as cofactor. The cofactor is Mg(2+).

It carries out the reaction (2R)-2,3-dihydroxy-3-methylbutanoate = 3-methyl-2-oxobutanoate + H2O. It catalyses the reaction (2R,3R)-2,3-dihydroxy-3-methylpentanoate = (S)-3-methyl-2-oxopentanoate + H2O. Its pathway is amino-acid biosynthesis; L-isoleucine biosynthesis; L-isoleucine from 2-oxobutanoate: step 3/4. It participates in amino-acid biosynthesis; L-valine biosynthesis; L-valine from pyruvate: step 3/4. Functionally, functions in the biosynthesis of branched-chain amino acids. Catalyzes the dehydration of (2R,3R)-2,3-dihydroxy-3-methylpentanoate (2,3-dihydroxy-3-methylvalerate) into 2-oxo-3-methylpentanoate (2-oxo-3-methylvalerate) and of (2R)-2,3-dihydroxy-3-methylbutanoate (2,3-dihydroxyisovalerate) into 2-oxo-3-methylbutanoate (2-oxoisovalerate), the penultimate precursor to L-isoleucine and L-valine, respectively. The sequence is that of Dihydroxy-acid dehydratase from Mycobacterium bovis (strain ATCC BAA-935 / AF2122/97).